A 140-amino-acid chain; its full sequence is ATP synthase epsilon chain (140 aa).

The protein belongs to the ATPase epsilon chain family. As to quaternary structure, F-type ATPases have 2 components, CF(1) - the catalytic core - and CF(0) - the membrane proton channel. CF(1) has five subunits: alpha(3), beta(3), gamma(1), delta(1), epsilon(1). CF(0) has three main subunits: a, b and c.

Its subcellular location is the cell membrane. Functionally, produces ATP from ADP in the presence of a proton gradient across the membrane. The polypeptide is ATP synthase epsilon chain (Dehalococcoides mccartyi (strain ATCC BAA-2100 / JCM 16839 / KCTC 5957 / BAV1)).